A 226-amino-acid polypeptide reads, in one-letter code: Pathogenesis-related protein R minor form (226 aa).

A signal peptide spans 1–25 (MNFLKSFPFYAFLCFGQYFVAVTHA). Cystine bridges form between cysteine 34-cysteine 225, cysteine 75-cysteine 85, cysteine 90-cysteine 96, cysteine 140-cysteine 214, cysteine 145-cysteine 197, cysteine 153-cysteine 163, cysteine 167-cysteine 176, and cysteine 177-cysteine 184.

It belongs to the thaumatin family.

The protein resides in the vacuole. The polypeptide is Pathogenesis-related protein R minor form (Nicotiana tabacum (Common tobacco)).